We begin with the raw amino-acid sequence, 355 residues long: MDTAEERLKGQAEIWEHMFAFVDSMALKCAVELGIPDIINSHGRPVTISEIVDSLKTNTPSSSPNIDYLTRIMRLLVHKRLFTSELHQESNQLLYNLTRSSKWLLKDSKFNLSPLVLWETNPILLKPWQYLGKCAQEKSSPFERAHGCEIWDLALADPKFNNFLNGAMQCSTTTIINEMLLEYKDGFSGIAGSLVDVGGGTGSIIAEIVKAHPHIQGINFDLPHVVATAAEFPGVKHVGGDMFVDIPEADAVIMKWILHDWSDEDCTIILKNCYRAIRKKKNGKVIIVDCVLRPDGNDLFDKMGLIFDVLMMAHTTAGKERTEAEWKILLNNAGFPRYNVIRTPAFPCIIEAFPE.

S-adenosyl-L-methionine-binding positions include 197 to 200, Asp221, 221 to 222, 241 to 242, and Lys255; these read VGGG, DL, and DM. His259 serves as the catalytic Proton acceptor.

It belongs to the class I-like SAM-binding methyltransferase superfamily. Cation-independent O-methyltransferase family. Homodimer. Expressed in capsules, buds and stems, and at lower levels in leaves. Localized to parenchyma cells within the vascular bundle, but only to those cells distal to laticifers. In roots, found in the pericycle within the stele.

The catalysed reaction is (S)-reticuline + S-adenosyl-L-methionine = (S)-laudanine + S-adenosyl-L-homocysteine + H(+). It carries out the reaction (R)-reticuline + S-adenosyl-L-methionine = (R)-laudanine + S-adenosyl-L-homocysteine + H(+). In terms of biological role, catalyzes the transfer of a methyl group to reticuline to form laudanine. Methylates the simple catechols guaiacol and isovanillic acid as well as the tetrahydrobenzylisoquinolines (R)-reticuline, (S)-reticuline, (R,S)-orientaline, (R)-protosinomenine and (R,S)-isoorientaline. Involved in the production of laudanine. The chain is (R,S)-reticuline 7-O-methyltransferase from Papaver somniferum (Opium poppy).